The sequence spans 395 residues: Elongation factor Tu (395 aa).

The tr-type G domain occupies 10–205 (KVHMNVGTIG…AMDSYFEDPV (196 aa)). Residues 19–26 (GHVDHGKT) form a G1 region. 19–26 (GHVDHGKT) contacts GTP. Thr-26 lines the Mg(2+) pocket. Residues 60–64 (GITIN) form a G2 region. A G3 region spans residues 81–84 (DCPG). GTP is bound by residues 81 to 85 (DCPGH) and 136 to 139 (NKVD). The G4 stretch occupies residues 136–139 (NKVD). Residues 173–175 (SAF) are G5.

The protein belongs to the TRAFAC class translation factor GTPase superfamily. Classic translation factor GTPase family. EF-Tu/EF-1A subfamily. As to quaternary structure, monomer.

The protein localises to the cytoplasm. The enzyme catalyses GTP + H2O = GDP + phosphate + H(+). GTP hydrolase that promotes the GTP-dependent binding of aminoacyl-tRNA to the A-site of ribosomes during protein biosynthesis. This is Elongation factor Tu from Treponema pallidum (strain Nichols).